The sequence spans 379 residues: tRNA-specific 2-thiouridylase MnmA (379 aa).

ATP contacts are provided by residues Ala9 to Ser16 and Met35. An interaction with target base in tRNA region spans residues Asn94–Asp96. Cys99 functions as the Nucleophile in the catalytic mechanism. Cysteines 99 and 195 form a disulfide. Gly123 lines the ATP pocket. An interaction with tRNA region spans residues Lys145–Gln147. Cys195 (cysteine persulfide intermediate) is an active-site residue. The interval Arg307 to Tyr308 is interaction with tRNA.

The protein belongs to the MnmA/TRMU family.

It is found in the cytoplasm. The enzyme catalyses S-sulfanyl-L-cysteinyl-[protein] + uridine(34) in tRNA + AH2 + ATP = 2-thiouridine(34) in tRNA + L-cysteinyl-[protein] + A + AMP + diphosphate + H(+). In terms of biological role, catalyzes the 2-thiolation of uridine at the wobble position (U34) of tRNA, leading to the formation of s(2)U34. The sequence is that of tRNA-specific 2-thiouridylase MnmA from Xylella fastidiosa (strain M12).